The following is a 364-amino-acid chain: Selection and upkeep of intraepithelial T-cells protein 11 (364 aa).

The first 28 residues, 1–28, serve as a signal peptide directing secretion; it reads MEPSASCLPGFFMVCILLKITVLTQVMS. The Ig-like V-type domain occupies 29-118; it reads LDIQINTQIP…TNQEKRRSII (90 aa). Residues 29–138 are Extracellular-facing; it reads LDIQINTQIP…MSLMSNNLLY (110 aa). C48 and C102 are oxidised to a cystine. A helical membrane pass occupies residues 139-159; the sequence is LGIYLIFILFLNFLKGILFCL. Over 160-186 the chain is Cytoplasmic; the sequence is TKRLVHFRKRMIKIKKVWSNKTRACCP. A helical membrane pass occupies residues 187-207; it reads LIWEFLEIVLFIAFLPLYLMF. Residues 208-230 lie on the Extracellular side of the membrane; the sequence is RIRVFTLDEAHILYNNWLWKVCK. Residues 231–251 traverse the membrane as a helical segment; the sequence is TLIAMMILFTVLILFLLWTLN. At 252-364 the chain is on the cytoplasmic side; sequence RYGKMPCLSS…LYSKLGNLTH (113 aa).

The protein belongs to the SKINT family. As to expression, expressed in skin and thymus.

The protein localises to the membrane. May act by engaging a cell surface molecule on immature T-cells in the embryonic thymus. The protein is Selection and upkeep of intraepithelial T-cells protein 11 (Skint11) of Mus musculus (Mouse).